The chain runs to 238 residues: Serine protease SplA (238 aa).

The first 38 residues, 1–38 (MNKNVMVKGLTALTILTILTSLGFAENISNQPHSIAKA), serve as a signal peptide directing secretion. Active-site charge relay system residues include His77, Asp116, and Ser192.

This sequence belongs to the peptidase S1B family.

Its subcellular location is the secreted. This chain is Serine protease SplA (splA), found in Staphylococcus aureus (strain COL).